The primary structure comprises 346 residues: Elongation factor Ts (346 aa).

The involved in Mg(2+) ion dislocation from EF-Tu stretch occupies residues 80 to 83 (TDFV).

Belongs to the EF-Ts family.

The protein localises to the cytoplasm. In terms of biological role, associates with the EF-Tu.GDP complex and induces the exchange of GDP to GTP. It remains bound to the aminoacyl-tRNA.EF-Tu.GTP complex up to the GTP hydrolysis stage on the ribosome. The chain is Elongation factor Ts from Streptococcus uberis (strain ATCC BAA-854 / 0140J).